Reading from the N-terminus, the 263-residue chain is Phosphate import ATP-binding protein PstB (263 aa).

Residues 16–258 (VTARNVTVSY…PRDTRTQDYI (243 aa)) form the ABC transporter domain. Residue 48–55 (GPSGCGKS) coordinates ATP.

It belongs to the ABC transporter superfamily. Phosphate importer (TC 3.A.1.7) family. As to quaternary structure, the complex is composed of two ATP-binding proteins (PstB), two transmembrane proteins (PstC and PstA) and a solute-binding protein (PstS).

It is found in the cell inner membrane. It carries out the reaction phosphate(out) + ATP + H2O = ADP + 2 phosphate(in) + H(+). Its function is as follows. Part of the ABC transporter complex PstSACB involved in phosphate import. Responsible for energy coupling to the transport system. The chain is Phosphate import ATP-binding protein PstB from Maricaulis maris (strain MCS10) (Caulobacter maris).